The primary structure comprises 283 residues: ESX-1 secretion-associated protein EspG1 (283 aa).

It belongs to the EspG family. In terms of assembly, interacts specifically with ESX-1-dependent PE/PPE proteins. Interacts with PPE68.

Its subcellular location is the cytoplasm. Functionally, specific chaperone for cognate PE/PPE proteins. Plays an important role in preventing aggregation of PE/PPE dimers. This Mycobacterium tuberculosis (strain ATCC 25618 / H37Rv) protein is ESX-1 secretion-associated protein EspG1.